Reading from the N-terminus, the 152-residue chain is Type-1 angiotensin II receptor-associated protein (152 aa).

Residues 1-23 are Extracellular-facing; it reads MELPAVNLKVILLGHWLLTTWGC. The helical transmembrane segment at 24-44 threads the bilayer; that stretch reads IVFSGSYAWANFTILALGVWA. The Cytoplasmic portion of the chain corresponds to 45–55; sequence VAQRDSIDAIS. The helical transmembrane segment at 56–76 threads the bilayer; it reads MFLGGLLATIFLDIVHISIFY. Residues 77 to 86 lie on the Extracellular side of the membrane; sequence PRAGLTDTGR. The chain crosses the membrane as a helical span at residues 87–107; it reads FGAGMAILSLLLKPLSCCFVY. The Cytoplasmic segment spans residues 108 to 152; that stretch reads HMYRQRGGFLGSSQDRSAYQTIDSAEAPANAFAVPEGRGQDARGY. A phosphoserine mark is found at S119 and S120. At T128 the chain carries Phosphothreonine. Residue S131 is modified to Phosphoserine.

As to quaternary structure, interacts with RACK1, and with the carboxy-terminal region of AGTR1.

The protein resides in the endoplasmic reticulum membrane. It localises to the golgi apparatus membrane. The protein localises to the cytoplasmic vesicle membrane. In terms of biological role, appears to be a negative regulator of type-1 angiotensin II receptor-mediated signaling by regulating receptor internalization as well as mechanism of receptor desensitization such as phosphorylation. Also induces a decrease in cell proliferation and angiotensin II-stimulated transcriptional activity. This Pongo abelii (Sumatran orangutan) protein is Type-1 angiotensin II receptor-associated protein (AGTRAP).